Consider the following 437-residue polypeptide: GTPase Obg (437 aa).

The 159-residue stretch at 2–160 (SMFLDTAKVS…RQLELELKIL (159 aa)) folds into the Obg domain. In terms of domain architecture, OBG-type G spans 161–338 (ADVGLVGFPS…LLEATAELLA (178 aa)). Residues 167 to 174 (GFPSVGKS), 192 to 196 (FTTIV), 214 to 217 (DLPG), 284 to 287 (NKMD), and 319 to 321 (SSL) contribute to the GTP site. Mg(2+)-binding residues include S174 and T194. Residues 359 to 437 (GFAAEEKAFE…IGKFEFEFVD (79 aa)) enclose the OCT domain.

The protein belongs to the TRAFAC class OBG-HflX-like GTPase superfamily. OBG GTPase family. As to quaternary structure, monomer. Requires Mg(2+) as cofactor.

The protein localises to the cytoplasm. In terms of biological role, an essential GTPase which binds GTP, GDP and possibly (p)ppGpp with moderate affinity, with high nucleotide exchange rates and a fairly low GTP hydrolysis rate. Plays a role in control of the cell cycle, stress response, ribosome biogenesis and in those bacteria that undergo differentiation, in morphogenesis control. The sequence is that of GTPase Obg from Streptococcus equi subsp. equi (strain 4047).